Here is a 195-residue protein sequence, read N- to C-terminus: Ribonuclease HII (195 aa).

Positions 6-195 constitute an RNase H type-2 domain; that stretch reads SLIAGVDEVG…KSFISRLKKN (190 aa). The a divalent metal cation site is built by Asp12, Glu13, and Asp108.

The protein belongs to the RNase HII family. Requires Mn(2+) as cofactor. The cofactor is Mg(2+).

It is found in the cytoplasm. It catalyses the reaction Endonucleolytic cleavage to 5'-phosphomonoester.. In terms of biological role, endonuclease that specifically degrades the RNA of RNA-DNA hybrids. In Prochlorococcus marinus (strain NATL2A), this protein is Ribonuclease HII.